A 61-amino-acid chain; its full sequence is Small ribosomal subunit protein uS14 (61 aa).

Positions 24, 27, 40, and 43 each coordinate Zn(2+).

Belongs to the universal ribosomal protein uS14 family. Zinc-binding uS14 subfamily. Part of the 30S ribosomal subunit. Contacts proteins S3 and S10. Requires Zn(2+) as cofactor.

Its function is as follows. Binds 16S rRNA, required for the assembly of 30S particles and may also be responsible for determining the conformation of the 16S rRNA at the A site. This is Small ribosomal subunit protein uS14 from Beutenbergia cavernae (strain ATCC BAA-8 / DSM 12333 / CCUG 43141 / JCM 11478 / NBRC 16432 / NCIMB 13614 / HKI 0122).